Reading from the N-terminus, the 517-residue chain is Mitochondrial division protein fszA (517 aa).

Residues G60–N64, G147–G149, E178, R182, and D225 each bind GTP. A disordered region spans residues F496 to E517. The span at T497–E517 shows a compositional bias: low complexity.

Belongs to the FtsZ family.

Its subcellular location is the mitochondrion matrix. Functionally, probably involved in mitochondrion division process. When overexpressed, induces mitochondrial tubule formation. Binds to and hydrolyzes GTP. In Dictyostelium discoideum (Social amoeba), this protein is Mitochondrial division protein fszA (fszA).